A 223-amino-acid polypeptide reads, in one-letter code: Cytidylate kinase (223 aa).

ATP is bound at residue 12 to 20; sequence GPAGSGKST.

This sequence belongs to the cytidylate kinase family. Type 1 subfamily.

It is found in the cytoplasm. It catalyses the reaction CMP + ATP = CDP + ADP. It carries out the reaction dCMP + ATP = dCDP + ADP. This is Cytidylate kinase from Onion yellows phytoplasma (strain OY-M).